We begin with the raw amino-acid sequence, 334 residues long: L-lactate dehydrogenase B-B chain (334 aa).

Residues 30 to 58 (GQVG…VEDK) and Arg100 contribute to the NAD(+) site. Substrate contacts are provided by Arg107, Asn139, and Arg170. Position 139 (Asn139) interacts with NAD(+). The Proton acceptor role is filled by His194. Thr249 is a substrate binding site.

Belongs to the LDH/MDH superfamily. LDH family. Homotetramer.

It localises to the cytoplasm. It catalyses the reaction (S)-lactate + NAD(+) = pyruvate + NADH + H(+). The protein operates within fermentation; pyruvate fermentation to lactate; (S)-lactate from pyruvate: step 1/1. In Danio rerio (Zebrafish), this protein is L-lactate dehydrogenase B-B chain.